The following is a 571-amino-acid chain: WAP, Kazal, immunoglobulin, Kunitz and NTR domain-containing protein 2 (571 aa).

The N-terminal stretch at 1–29 (MCAPGYHRFWFHWGLLLLLLLEAPLRGLA) is a signal peptide. A WAP domain is found at 34–87 (RYSHAGICPNDMNPNLWVDAQSTCKRECETDQECETYEKCCPNVCGTKSCVAAR). 8 disulfide bridges follow: cysteine 41/cysteine 74, cysteine 57/cysteine 78, cysteine 61/cysteine 73, cysteine 67/cysteine 83, cysteine 129/cysteine 159, cysteine 133/cysteine 152, cysteine 141/cysteine 170, and cysteine 226/cysteine 282. Residues 121–172 (WDGQPVCKCKDRCEKEPSFTCASDGLTYYNRCFMDAEACSKGITLSVVTCRY) enclose the Kazal-like domain. One can recognise an Ig-like C2-type domain in the interval 205–298 (PALLNHPVHQ…GVLRADFPLS (94 aa)). Asparagine 314 carries N-linked (GlcNAc...) asparagine glycosylation. Intrachain disulfides connect cysteine 323–cysteine 373, cysteine 332–cysteine 356, cysteine 348–cysteine 369, cysteine 381–cysteine 431, cysteine 390–cysteine 414, cysteine 406–cysteine 427, cysteine 440–cysteine 510, cysteine 443–cysteine 512, and cysteine 454–cysteine 561. BPTI/Kunitz inhibitor domains follow at residues 323–373 (CLKP…MLAC) and 381–431 (CSLP…EESC). Residues 440-561 (CRACKPRQKL…LREVMYKKTC (122 aa)) enclose the NTR domain. Asparagine 514 carries an N-linked (GlcNAc...) asparagine glycan.

The protein belongs to the WFIKKN family. As to quaternary structure, interacts with both mature and propeptide myostatin/MSTN. As to expression, widely expressed, with high expression in skeletal muscle and heart. Also expressed in brain, lung and testis. Weakly expressed in liver and kidney.

It localises to the secreted. Its function is as follows. Protease-inhibitor that contains multiple distinct protease inhibitor domains. Probably has serine protease- and metalloprotease-inhibitor activity. Inhibits the biological activity of mature myostatin, but not activin. The polypeptide is WAP, Kazal, immunoglobulin, Kunitz and NTR domain-containing protein 2 (Wfikkn2) (Mus musculus (Mouse)).